Consider the following 213-residue polypeptide: Nucleolar protein 12 (213 aa).

Residues 33-96 (GFHKRKVERK…RLVTAKTESV (64 aa)) are a coiled coil. The disordered stretch occupies residues 118–213 (ARLLGLTPPE…LTGKARHSGE (96 aa)). Composition is skewed to basic residues over residues 170–182 (AHSR…KHPR) and 198–213 (KAQR…HSGE).

It belongs to the RRP17 family. As to quaternary structure, interacts with KIAA1191.

Its subcellular location is the nucleus. It localises to the nucleolus. The protein localises to the cytoplasm. In terms of biological role, multifunctional RNA binding protein that plays a role in RNA metabolism and DNA maintenance. Participates in the resolution of DNA stress and the maintenance of genome integrity by localizing to sites of DNA insults. Also plays a role in proper nucleolar organization by limiting nucleolar size and regulating nucleolar number. Mechanistically, regulates the nucleolar levels of fibrillarin and nucleolin, two key players in pre-rRNA processing and ribosome assembly. This is Nucleolar protein 12 (NOL12) from Homo sapiens (Human).